We begin with the raw amino-acid sequence, 330 residues long: ADP-L-glycero-D-manno-heptose-6-epimerase (330 aa).

NADP(+) contacts are provided by residues 11 to 12 (FI), 32 to 33 (DN), K39, K54, 75 to 79 (EGACS), and N92. Y139 acts as the Proton acceptor in catalysis. An NADP(+)-binding site is contributed by K143. A substrate-binding site is contributed by N168. NADP(+) is bound by residues V169 and K177. Residue K177 is the Proton acceptor of the active site. Substrate is bound by residues R179, H186, 200–203 (FGEY), R213, and Y292.

The protein belongs to the NAD(P)-dependent epimerase/dehydratase family. HldD subfamily. As to quaternary structure, homopentamer. Requires NADP(+) as cofactor.

The enzyme catalyses ADP-D-glycero-beta-D-manno-heptose = ADP-L-glycero-beta-D-manno-heptose. The protein operates within nucleotide-sugar biosynthesis; ADP-L-glycero-beta-D-manno-heptose biosynthesis; ADP-L-glycero-beta-D-manno-heptose from D-glycero-beta-D-manno-heptose 7-phosphate: step 4/4. In terms of biological role, catalyzes the interconversion between ADP-D-glycero-beta-D-manno-heptose and ADP-L-glycero-beta-D-manno-heptose via an epimerization at carbon 6 of the heptose. The sequence is that of ADP-L-glycero-D-manno-heptose-6-epimerase from Paraburkholderia phytofirmans (strain DSM 17436 / LMG 22146 / PsJN) (Burkholderia phytofirmans).